Reading from the N-terminus, the 139-residue chain is Small ribosomal subunit protein uS12 (139 aa).

2 disordered regions span residues 1 to 22 (MPTINQLVRKGRKSHKGKSKSP) and 37 to 57 (KTPSPQKRGVATRVGTMTPKK). A compositionally biased stretch (basic residues) spans 9–19 (RKGRKSHKGKS). Position 102 is a 3-methylthioaspartic acid (Asp-102).

Belongs to the universal ribosomal protein uS12 family. Part of the 30S ribosomal subunit. Contacts proteins S8 and S17. May interact with IF1 in the 30S initiation complex.

In terms of biological role, with S4 and S5 plays an important role in translational accuracy. Interacts with and stabilizes bases of the 16S rRNA that are involved in tRNA selection in the A site and with the mRNA backbone. Located at the interface of the 30S and 50S subunits, it traverses the body of the 30S subunit contacting proteins on the other side and probably holding the rRNA structure together. The combined cluster of proteins S8, S12 and S17 appears to hold together the shoulder and platform of the 30S subunit. The sequence is that of Small ribosomal subunit protein uS12 from Limosilactobacillus reuteri (strain DSM 20016) (Lactobacillus reuteri).